The primary structure comprises 427 residues: Tol-Pal system protein TolB (427 aa).

The N-terminal stretch at 1–23 (MKLLKRLVSVFAIVLAVGSNAFA) is a signal peptide.

Belongs to the TolB family. In terms of assembly, the Tol-Pal system is composed of five core proteins: the inner membrane proteins TolA, TolQ and TolR, the periplasmic protein TolB and the outer membrane protein Pal. They form a network linking the inner and outer membranes and the peptidoglycan layer.

It localises to the periplasm. Its function is as follows. Part of the Tol-Pal system, which plays a role in outer membrane invagination during cell division and is important for maintaining outer membrane integrity. The chain is Tol-Pal system protein TolB from Haemophilus influenzae (strain PittGG).